The following is a 406-amino-acid chain: Linalool 8-monooxygenase (406 aa).

Position 355 (cysteine 355) interacts with heme.

This sequence belongs to the cytochrome P450 family. Heme is required as a cofactor.

It carries out the reaction linalool + 2 reduced [NADPH--hemoprotein reductase] + 2 O2 = (6E)-8-oxolinalool + 2 oxidized [NADPH--hemoprotein reductase] + 3 H2O + 2 H(+). It participates in terpene metabolism; linalool degradation. Catalyzes the 8-methyl hydroxylation of linalool. The chain is Linalool 8-monooxygenase (linC) from Pseudomonas putida (Arthrobacter siderocapsulatus).